Consider the following 194-residue polypeptide: GTP cyclohydrolase 1 (194 aa).

Zn(2+) contacts are provided by C83, H86, and C155.

The protein belongs to the GTP cyclohydrolase I family. As to quaternary structure, toroid-shaped homodecamer, composed of two pentamers of five dimers.

The catalysed reaction is GTP + H2O = 7,8-dihydroneopterin 3'-triphosphate + formate + H(+). The protein operates within cofactor biosynthesis; 7,8-dihydroneopterin triphosphate biosynthesis; 7,8-dihydroneopterin triphosphate from GTP: step 1/1. The protein is GTP cyclohydrolase 1 of Streptococcus pyogenes serotype M3 (strain ATCC BAA-595 / MGAS315).